The following is a 311-amino-acid chain: Methionyl-tRNA formyltransferase (311 aa).

109–112 (SLLP) provides a ligand contact to (6S)-5,6,7,8-tetrahydrofolate.

This sequence belongs to the Fmt family.

The enzyme catalyses L-methionyl-tRNA(fMet) + (6R)-10-formyltetrahydrofolate = N-formyl-L-methionyl-tRNA(fMet) + (6S)-5,6,7,8-tetrahydrofolate + H(+). In terms of biological role, attaches a formyl group to the free amino group of methionyl-tRNA(fMet). The formyl group appears to play a dual role in the initiator identity of N-formylmethionyl-tRNA by promoting its recognition by IF2 and preventing the misappropriation of this tRNA by the elongation apparatus. The polypeptide is Methionyl-tRNA formyltransferase (Marinobacter nauticus (strain ATCC 700491 / DSM 11845 / VT8) (Marinobacter aquaeolei)).